The chain runs to 207 residues: ATP-dependent Clp protease proteolytic subunit (207 aa).

The active-site Nucleophile is S111. The active site involves H136.

The protein belongs to the peptidase S14 family. Fourteen ClpP subunits assemble into 2 heptameric rings which stack back to back to give a disk-like structure with a central cavity, resembling the structure of eukaryotic proteasomes.

It localises to the cytoplasm. The enzyme catalyses Hydrolysis of proteins to small peptides in the presence of ATP and magnesium. alpha-casein is the usual test substrate. In the absence of ATP, only oligopeptides shorter than five residues are hydrolyzed (such as succinyl-Leu-Tyr-|-NHMec, and Leu-Tyr-Leu-|-Tyr-Trp, in which cleavage of the -Tyr-|-Leu- and -Tyr-|-Trp bonds also occurs).. Cleaves peptides in various proteins in a process that requires ATP hydrolysis. Has a chymotrypsin-like activity. Plays a major role in the degradation of misfolded proteins. The sequence is that of ATP-dependent Clp protease proteolytic subunit from Psychromonas ingrahamii (strain DSM 17664 / CCUG 51855 / 37).